Consider the following 86-residue polypeptide: MRKDIHPDYRPVVFLDTTTGYKFLSGSTKSSKETIEFEGETYPLIRVEISSDSHPFYTGRQKFTQADGRVDRFNKKYGLKDANAAK.

Belongs to the bacterial ribosomal protein bL31 family. Type B subfamily. Part of the 50S ribosomal subunit.

The chain is Large ribosomal subunit protein bL31B from Streptococcus uberis (strain ATCC BAA-854 / 0140J).